Here is a 378-residue protein sequence, read N- to C-terminus: Dihydroorotate dehydrogenase (quinone) (378 aa).

Residues Ala77–Lys81 and Thr101 contribute to the FMN site. Residue Lys81 participates in substrate binding. Asn126 to Phe130 is a binding site for substrate. FMN is bound by residues Asn158 and Asn191. Asn191 is a substrate binding site. Ser194 serves as the catalytic Nucleophile. Asn196 contacts substrate. FMN is bound by residues Lys229 and Thr257. Position 258–259 (Asn258–Thr259) interacts with substrate. FMN is bound by residues Gly287, Gly316, and Tyr337–Thr338.

Belongs to the dihydroorotate dehydrogenase family. Type 2 subfamily. Monomer. It depends on FMN as a cofactor.

The protein resides in the cell membrane. It carries out the reaction (S)-dihydroorotate + a quinone = orotate + a quinol. It participates in pyrimidine metabolism; UMP biosynthesis via de novo pathway; orotate from (S)-dihydroorotate (quinone route): step 1/1. Functionally, catalyzes the conversion of dihydroorotate to orotate with quinone as electron acceptor. The chain is Dihydroorotate dehydrogenase (quinone) from Synechococcus elongatus (strain ATCC 33912 / PCC 7942 / FACHB-805) (Anacystis nidulans R2).